The primary structure comprises 375 residues: Chaperone protein DnaJ (375 aa).

Residues 5–70 (GYYEVLGVSK…QKRQAYDQFG (66 aa)) enclose the J domain. Residues 142–220 (GKEYKIEIPR…CKGEGLTEKR (79 aa)) form a CR-type zinc finger. Zn(2+)-binding residues include Cys155, Cys158, Cys172, Cys175, Cys194, Cys197, Cys208, and Cys211. 4 CXXCXGXG motif repeats span residues 155–162 (CVDCTGSG), 172–179 (CPDCSGTG), 194–201 (CPRCKGKG), and 208–215 (CKTCKGEG).

It belongs to the DnaJ family. In terms of assembly, homodimer. It depends on Zn(2+) as a cofactor.

It localises to the cytoplasm. Functionally, participates actively in the response to hyperosmotic and heat shock by preventing the aggregation of stress-denatured proteins and by disaggregating proteins, also in an autonomous, DnaK-independent fashion. Unfolded proteins bind initially to DnaJ; upon interaction with the DnaJ-bound protein, DnaK hydrolyzes its bound ATP, resulting in the formation of a stable complex. GrpE releases ADP from DnaK; ATP binding to DnaK triggers the release of the substrate protein, thus completing the reaction cycle. Several rounds of ATP-dependent interactions between DnaJ, DnaK and GrpE are required for fully efficient folding. Also involved, together with DnaK and GrpE, in the DNA replication of plasmids through activation of initiation proteins. The protein is Chaperone protein DnaJ of Leptospira biflexa serovar Patoc (strain Patoc 1 / Ames).